A 232-amino-acid polypeptide reads, in one-letter code: MAKKGKKYVEAAKLVDRTKAYDVNEAIELVKKTNTAKFDATVEAAFRLGVDPRKNDQQIRGAVVLPNGTGKTQRVLVFAKGEKAKEAEAAGADYVGDADYINKIQQGWFDFDVIVATPDMMGEVGKIGRVLGPKGLMPNPKTGTVTFEVEKAVNEIKAGKVEYRVDKAGNIHVPIGKVSFEEGKLVENFATMYDTILKAKPAAAKGVYVKNVSVTSTMGPGIKVDPSTFNVK.

The protein belongs to the universal ribosomal protein uL1 family. Part of the 50S ribosomal subunit.

Functionally, binds directly to 23S rRNA. The L1 stalk is quite mobile in the ribosome, and is involved in E site tRNA release. Its function is as follows. Protein L1 is also a translational repressor protein, it controls the translation of the L11 operon by binding to its mRNA. The protein is Large ribosomal subunit protein uL1 of Bacillus licheniformis (strain ATCC 14580 / DSM 13 / JCM 2505 / CCUG 7422 / NBRC 12200 / NCIMB 9375 / NCTC 10341 / NRRL NRS-1264 / Gibson 46).